The primary structure comprises 1022 residues: Collagen alpha-1(I) chain (1022 aa).

The tract at residues 1-1022 is disordered; sequence SAGGISVPGP…PGPPGPPGPP (1022 aa). 11 positions are modified to 4-hydroxyproline: P20, P23, P26, P35, P38, P41, P56, P71, P77, P86, and P92. The segment covering 28–47 has biased composition (low complexity); sequence PQGFQGPPGEPGEPGASGPM. Basic and acidic residues predominate over residues 59 to 73; sequence NGDDGEAGKPGRPGE. K95 carries the 5-hydroxylysine; alternate modification. An O-linked (Gal...) hydroxylysine; alternate glycan is attached at K95. At S101 the chain carries Phosphoserine. Over residues 109 to 125 the composition is skewed to low complexity; sequence DAGPAGPKGEPGSPGEN. P119, P122, P128, P137, P143, P164, P173, P176, P203, P206, P218, P224, P233, P239, P242, and P257 each carry 4-hydroxyproline. Residues 143–161 show a composition bias toward low complexity; the sequence is PGASGPAGARGNDGAAGAA. Positions 163–175 are enriched in pro residues; that stretch reads PPGPTGPAGPPGF. Residues 209–259 are compositionally biased toward low complexity; sequence AGAAGPAGNPGADGQPGAKGANGAPGIAGAPGFPGARGPSGPQGPSGAPGP. Residue K260 is modified to 5-hydroxylysine. P266, P269, P281, P290, P305, P311, P320, and P326 each carry 4-hydroxyproline. The span at 315–324 shows a compositional bias: gly residues; it reads GERGGPGSRG. The residue at position 335 (K335) is a 5-hydroxylysine. 4-hydroxyproline is present on residues P344, P353, P359, P365, P374, P377, P386, P395, P401, P413, P422, P431, P434, P452, P470, P476, P482, P488, P494, P500, P512, P521, P533, P545, P548, P554, P560, and P569. The segment covering 368–394 has biased composition (low complexity); the sequence is KGLTGSPGSPGPDGKTGPPGPAGQDGR. Residues 403–422 show a composition bias toward low complexity; the sequence is ARGQAGVMGFPGPKGAAGEP. Residues 464 to 491 are compositionally biased toward low complexity; that stretch reads QGPAGSPGFQGLPGPAGPPGEAGKPGEQ. A compositionally biased stretch (low complexity) spans 530–557; that stretch reads NGAPGNDGAKGDAGAPGAPGSQGAPGLQ. K581 bears the 5-hydroxylysine mark. 3 positions are modified to 4-hydroxyproline: P587, P602, and P608. Low complexity predominate over residues 614–628; the sequence is SGPSGPAGPTGARGA. The residue at position 617 (S617) is a Phosphoserine. 4-hydroxyproline occurs at positions 629, 635, 638, 647, 653, 671, 680, and 689. Residues 641–668 show a composition bias toward low complexity; that stretch reads AGFAGPPGADGQPGAKGEPGDAGAKGDA. The segment covering 670–682 has biased composition (pro residues); it reads PPGPAGPTGPPGP. K692 carries the 5-hydroxylysine modification. Positions 697-713 are enriched in low complexity; sequence SAGPPGATGFPGAAGRV. 2 positions are modified to 4-hydroxyproline: P701 and P707. Residue P715 is modified to 3-hydroxyproline. A 4-hydroxyproline mark is found at P716, P725, P728, P749, P758, P767, P776, P794, P803, P806, P812, P827, P833, P839, P848, and P854. The span at 742–751 shows a compositional bias: low complexity; the sequence is ETGPAGRPGE. Low complexity predominate over residues 761-776; it reads TGEKGSPGADGPAGAP. Pro residues predominate over residues 826 to 836; it reads PPGPVGPPGLA. Low complexity predominate over residues 838–853; sequence PPGESGREGSPGAEGS. K863 carries the post-translational modification 5-hydroxylysine. A compositionally biased stretch (pro residues) spans 872–887; it reads AGPPGAPGAPGAPGPV. 4-hydroxyproline is present on residues P875, P878, and P881. Residues 908-922 are compositionally biased toward low complexity; that stretch reads AGPAGARGPAGPQGP. The span at 923 to 937 shows a compositional bias: basic and acidic residues; it reads RGDKGETGEQGDRGI. K926 is modified (5-hydroxylysine). Position 938 is a 5-hydroxylysine; alternate (K938). The O-linked (Gal...) hydroxylysine; alternate glycan is linked to K938. A 4-hydroxyproline mark is found at P953, P956, P974, and P989. The segment covering 956–989 has biased composition (low complexity); it reads PGEQGPSGASGPAGPRGPPGSAGSPGKDGLNGLP. P994 is subject to 3-hydroxyproline. A 4-hydroxyproline modification is found at P995. Pro residues predominate over residues 1007–1022; the sequence is VGPPGPPGPPGPPGPP. At P1009 the chain carries 3-hydroxyproline. A 4-hydroxyproline modification is found at P1010. P1012 is modified (3-hydroxyproline). P1013 carries the 4-hydroxyproline modification. The residue at position 1015 (P1015) is a 3-hydroxyproline. P1016, P1019, and P1022 each carry 4-hydroxyproline.

This sequence belongs to the fibrillar collagen family. In terms of assembly, trimers of one alpha 2(I) and two alpha 1(I) chains. Prolines at the third position of the tripeptide repeating unit (G-X-Y) are hydroxylated in some or all of the chains. As to expression, expressed in bone.

The protein resides in the secreted. It localises to the extracellular space. The protein localises to the extracellular matrix. Type I collagen is a member of group I collagen (fibrillar forming collagen). The protein is Collagen alpha-1(I) chain of Mylodon darwinii (Giant ground sloth).